The sequence spans 96 residues: Protein Vpr (96 aa).

The homooligomerization stretch occupies residues 1–42; the sequence is MEQAPEDQGPQREPYNQWALELLEELKNEAVRHFPRIWLHGL. Phosphoserine; by host is present on residues Ser79, Ser94, and Ser96.

It belongs to the HIV-1 VPR protein family. In terms of assembly, homooligomer, may form homodimer. Interacts with p6-gag region of the Pr55 Gag precursor protein through a (Leu-X-X)4 motif near the C-terminus of the P6gag protein. Interacts with host UNG. May interact with host RAD23A/HHR23A. Interacts with host VPRBP/DCAF1, leading to hijack the CUL4A-RBX1-DDB1-DCAF1/VPRBP complex, mediating ubiquitination of host proteins such as TERT and ZGPAT and arrest of the cell cycle in G2 phase. Post-translationally, phosphorylated on several residues by host. These phosphorylations regulate VPR activity for the nuclear import of the HIV-1 pre-integration complex.

It is found in the virion. Its subcellular location is the host nucleus. The protein resides in the host extracellular space. During virus replication, may deplete host UNG protein, and incude G2-M cell cycle arrest. Acts by targeting specific host proteins for degradation by the 26S proteasome, through association with the cellular CUL4A-DDB1 E3 ligase complex by direct interaction with host VPRPB/DCAF-1. Cell cycle arrest reportedly occurs within hours of infection and is not blocked by antiviral agents, suggesting that it is initiated by the VPR carried into the virion. Additionally, VPR induces apoptosis in a cell cycle dependent manner suggesting that these two effects are mechanistically linked. Detected in the serum and cerebrospinal fluid of AIDS patient, VPR may also induce cell death to bystander cells. Its function is as follows. During virus entry, plays a role in the transport of the viral pre-integration (PIC) complex to the host nucleus. This function is crucial for viral infection of non-dividing macrophages. May act directly at the nuclear pore complex, by binding nucleoporins phenylalanine-glycine (FG)-repeat regions. In Human immunodeficiency virus type 1 group M subtype B (isolate MN) (HIV-1), this protein is Protein Vpr.